The primary structure comprises 356 residues: Phospho-N-acetylmuramoyl-pentapeptide-transferase (356 aa).

The next 9 helical transmembrane spans lie at 27–47 (AAAITALLIGLIFGPRFIGWM), 74–94 (MGGLMILIAVSISLFLWMDFA), 97–117 (YVWACIAVMLGFGVIGFIDDY), 128–148 (VSGKVRLLWEFGIAFFACYLI), 164–184 (PVIDLGWFYYPFAAFVIVGTA), 201–221 (VIIASLAFFVISYVVGNAVFA), 241–261 (AIIGAGFAFLWFNAPPAAIFM), 284–304 (IVLGIVGGLFVAEALSVIIQV), and 333–353 (TVVIRFWIISFALALLGLATL).

It belongs to the glycosyltransferase 4 family. MraY subfamily. Requires Mg(2+) as cofactor.

It localises to the cell inner membrane. It carries out the reaction UDP-N-acetyl-alpha-D-muramoyl-L-alanyl-gamma-D-glutamyl-meso-2,6-diaminopimeloyl-D-alanyl-D-alanine + di-trans,octa-cis-undecaprenyl phosphate = di-trans,octa-cis-undecaprenyl diphospho-N-acetyl-alpha-D-muramoyl-L-alanyl-D-glutamyl-meso-2,6-diaminopimeloyl-D-alanyl-D-alanine + UMP. Its pathway is cell wall biogenesis; peptidoglycan biosynthesis. Functionally, catalyzes the initial step of the lipid cycle reactions in the biosynthesis of the cell wall peptidoglycan: transfers peptidoglycan precursor phospho-MurNAc-pentapeptide from UDP-MurNAc-pentapeptide onto the lipid carrier undecaprenyl phosphate, yielding undecaprenyl-pyrophosphoryl-MurNAc-pentapeptide, known as lipid I. The polypeptide is Phospho-N-acetylmuramoyl-pentapeptide-transferase (Zymomonas mobilis subsp. mobilis (strain ATCC 31821 / ZM4 / CP4)).